The primary structure comprises 150 residues: 3-hydroxyacyl-[acyl-carrier-protein] dehydratase FabZ (150 aa).

The active site involves H54.

It belongs to the thioester dehydratase family. FabZ subfamily.

The protein localises to the cytoplasm. The catalysed reaction is a (3R)-hydroxyacyl-[ACP] = a (2E)-enoyl-[ACP] + H2O. In terms of biological role, involved in unsaturated fatty acids biosynthesis. Catalyzes the dehydration of short chain beta-hydroxyacyl-ACPs and long chain saturated and unsaturated beta-hydroxyacyl-ACPs. The protein is 3-hydroxyacyl-[acyl-carrier-protein] dehydratase FabZ of Aliivibrio fischeri (strain ATCC 700601 / ES114) (Vibrio fischeri).